The sequence spans 121 residues: Aspartate 1-decarboxylase (121 aa).

Serine 25 serves as the catalytic Schiff-base intermediate with substrate; via pyruvic acid. Serine 25 is modified (pyruvic acid (Ser)). Threonine 57 provides a ligand contact to substrate. Tyrosine 58 (proton donor) is an active-site residue. 73 to 75 contacts substrate; it reads GAA.

Belongs to the PanD family. As to quaternary structure, heterooctamer of four alpha and four beta subunits. The cofactor is pyruvate. Is synthesized initially as an inactive proenzyme, which is activated by self-cleavage at a specific serine bond to produce a beta-subunit with a hydroxyl group at its C-terminus and an alpha-subunit with a pyruvoyl group at its N-terminus.

The protein localises to the cytoplasm. The catalysed reaction is L-aspartate + H(+) = beta-alanine + CO2. The protein operates within cofactor biosynthesis; (R)-pantothenate biosynthesis; beta-alanine from L-aspartate: step 1/1. Its function is as follows. Catalyzes the pyruvoyl-dependent decarboxylation of aspartate to produce beta-alanine. The protein is Aspartate 1-decarboxylase of Wolinella succinogenes (strain ATCC 29543 / DSM 1740 / CCUG 13145 / JCM 31913 / LMG 7466 / NCTC 11488 / FDC 602W) (Vibrio succinogenes).